The chain runs to 152 residues: Snaclec coagulation factor IX/factor X-binding protein subunit A (152 aa).

An N-terminal signal peptide occupies residues 1–23; it reads MGRFIFLSFGLLVVFLSLSGTGA. Disulfide bonds link cysteine 25–cysteine 36, cysteine 53–cysteine 150, and cysteine 125–cysteine 142. The C-type lectin domain maps to 32-151; sequence YEGHCYNIFH…CGERNPFVCE (120 aa). Residues serine 64, glutamate 66, and glutamate 70 each contribute to the Ca(2+) site. Glutamate 151 is a binding site for Ca(2+).

The protein belongs to the snaclec family. Heterodimer of subunits A and B; disulfide-linked. As to expression, expressed by the venom gland.

It is found in the secreted. Functionally, anticoagulant protein which binds to the gamma-carboxyglutamic acid-domain regions of factors IX (F9) and factor X (F10) in the presence of calcium with a 1 to 1 stoichiometry. The protein is Snaclec coagulation factor IX/factor X-binding protein subunit A of Gloydius halys (Chinese water mocassin).